Consider the following 85-residue polypeptide: RNA-binding protein Hfq (85 aa).

Positions 9 to 68 (DPFLNALRRERIPVSIYLVNGIKLQGQIESFDQFVILLKNTVNQMVYKHAISTVVPARPV) constitute a Sm domain. The tract at residues 66 to 85 (RPVNHHHASDRPATLEKTEE) is disordered. Residues 72 to 85 (HASDRPATLEKTEE) show a composition bias toward basic and acidic residues.

Belongs to the Hfq family. Homohexamer.

Functionally, RNA chaperone that binds small regulatory RNA (sRNAs) and mRNAs to facilitate mRNA translational regulation in response to envelope stress, environmental stress and changes in metabolite concentrations. Also binds with high specificity to tRNAs. This chain is RNA-binding protein Hfq, found in Photobacterium profundum (strain SS9).